The following is a 170-amino-acid chain: Probable peptide methionine sulfoxide reductase (170 aa).

The protein belongs to the MsrA Met sulfoxide reductase family.

Its subcellular location is the cytoplasm. It localises to the nucleus. The catalysed reaction is L-methionyl-[protein] + [thioredoxin]-disulfide + H2O = L-methionyl-(S)-S-oxide-[protein] + [thioredoxin]-dithiol. The enzyme catalyses [thioredoxin]-disulfide + L-methionine + H2O = L-methionine (S)-S-oxide + [thioredoxin]-dithiol. Functionally, has an important function as a repair enzyme for proteins that have been inactivated by oxidation. Catalyzes the reversible oxidation-reduction of methionine sulfoxide in proteins to methionine. The chain is Probable peptide methionine sulfoxide reductase (mxr1) from Schizosaccharomyces pombe (strain 972 / ATCC 24843) (Fission yeast).